The sequence spans 432 residues: Sensor histidine kinase YrkQ (432 aa).

Residues 1-12 (MAHLKFTLTKKL) are Cytoplasmic-facing. The helical transmembrane segment at 13-33 (ALLIMVAAIVSGVIFLTLQKI) threads the bilayer. Residues 34-145 (TDDLIEGYLS…GFYSSRYYDL (112 aa)) are Extracellular-facing. The helical transmembrane segment at 146–166 (AFALDLLGATLIFLIIVLFGI) threads the bilayer. The HAMP domain maps to 167–219 (RQSLRYLKTIHQEIHILEGGELDYEMTIKGHDELAMIAKSIEDLRKAFLDKLK). Residues 167–432 (RQSLRYLKTI…IVLRFWNTKM (266 aa)) are Cytoplasmic-facing. In terms of domain architecture, Histidine kinase spans 234-432 (EMSHDMRTPL…IVLRFWNTKM (199 aa)). Position 237 is a phosphohistidine; by autocatalysis (His237).

The protein localises to the cell membrane. It catalyses the reaction ATP + protein L-histidine = ADP + protein N-phospho-L-histidine.. Member of the two-component regulatory system YrkQ/YrkP. Probably activates YrkP by phosphorylation. This is Sensor histidine kinase YrkQ (yrkQ) from Bacillus subtilis (strain 168).